The sequence spans 273 residues: Ribosomal RNA small subunit methyltransferase A (273 aa).

Residues N18, L20, G45, E66, D91, and N113 each coordinate S-adenosyl-L-methionine.

Belongs to the class I-like SAM-binding methyltransferase superfamily. rRNA adenine N(6)-methyltransferase family. RsmA subfamily.

The protein resides in the cytoplasm. It carries out the reaction adenosine(1518)/adenosine(1519) in 16S rRNA + 4 S-adenosyl-L-methionine = N(6)-dimethyladenosine(1518)/N(6)-dimethyladenosine(1519) in 16S rRNA + 4 S-adenosyl-L-homocysteine + 4 H(+). Functionally, specifically dimethylates two adjacent adenosines (A1518 and A1519) in the loop of a conserved hairpin near the 3'-end of 16S rRNA in the 30S particle. May play a critical role in biogenesis of 30S subunits. The chain is Ribosomal RNA small subunit methyltransferase A from Salmonella newport (strain SL254).